A 456-amino-acid polypeptide reads, in one-letter code: GTPase Der (456 aa).

2 consecutive EngA-type G domains span residues 3–167 (FTIA…PPSD) and 185–360 (IRVA…AVWN). Residues 9 to 16 (GRPNVGKS), 56 to 60 (DTAGL), and 119 to 122 (NKSE) each bind GTP. A disordered region spans residues 162–181 (IVPPSDDEDDEREETDEERA). The span at 166-178 (SDDEDDEREETDE) shows a compositional bias: acidic residues. GTP-binding positions include 191–198 (GRPNAGKS), 238–242 (DTAGL), and 303–306 (NKWD). The KH-like domain maps to 361–445 (RRVPTAALNR…PVRITLREKA (85 aa)).

It belongs to the TRAFAC class TrmE-Era-EngA-EngB-Septin-like GTPase superfamily. EngA (Der) GTPase family. As to quaternary structure, associates with the 50S ribosomal subunit.

In terms of biological role, GTPase that plays an essential role in the late steps of ribosome biogenesis. The sequence is that of GTPase Der from Bradyrhizobium sp. (strain ORS 278).